Reading from the N-terminus, the 227-residue chain is PKHD-type hydroxylase Veis_3084 (227 aa).

The interval 27-51 (DDGKDSAGTQARQAKNNQQLPRDSE) is disordered. The span at 33 to 47 (AGTQARQAKNNQQLP) shows a compositional bias: polar residues. The 102-residue stretch at 78–179 (RVFPPRVNRY…RMACFFWVES (102 aa)) folds into the Fe2OG dioxygenase domain. 3 residues coordinate Fe cation: H97, D99, and H160. R170 is a binding site for 2-oxoglutarate.

It depends on Fe(2+) as a cofactor. The cofactor is L-ascorbate.

This chain is PKHD-type hydroxylase Veis_3084, found in Verminephrobacter eiseniae (strain EF01-2).